The sequence spans 468 residues: Proline--tRNA ligase (468 aa).

Belongs to the class-II aminoacyl-tRNA synthetase family. ProS type 3 subfamily. In terms of assembly, homodimer.

The protein localises to the cytoplasm. The catalysed reaction is tRNA(Pro) + L-proline + ATP = L-prolyl-tRNA(Pro) + AMP + diphosphate. Catalyzes the attachment of proline to tRNA(Pro) in a two-step reaction: proline is first activated by ATP to form Pro-AMP and then transferred to the acceptor end of tRNA(Pro). In Frankia alni (strain DSM 45986 / CECT 9034 / ACN14a), this protein is Proline--tRNA ligase.